Consider the following 470-residue polypeptide: V-type proton ATPase subunit S1 (470 aa).

A signal peptide spans 1 to 41 (MMAAMATARVRMGPRCAQALWRMPWLPVFLSLAAAAAAAAA). The propeptide occupies 42 to 231 (EQQVPLVLWS…TAVRPSRVAR (190 aa)). Residues 42 to 419 (EQQVPLVLWS…EQFSYASDCA (378 aa)) lie on the Lumenal side of the membrane. 7 N-linked (GlcNAc...) asparagine glycosylation sites follow: N170, N261, N273, N296, N303, N350, and N357. A disulfide bond links C371 and C418. The helical transmembrane segment at 420–440 (SFFSPGIWMGLLTSLFMLFIF) threads the bilayer. Residues 441–470 (TYGLHMILSLKTMDRFDDHKGPTISLTQIV) are Cytoplasmic-facing. Position 465 is a phosphoserine (S465).

It belongs to the vacuolar ATPase subunit S1 family. As to quaternary structure, accessory component of the multisubunit proton-transporting vacuolar (V)-ATPase protein pump. Interacts (via N-terminus) with ATP6AP2 (via N-terminus). Interacts with RNASEK. Interacts with TMEM106B (via C-terminus). Post-translationally, N-glycosylated. In terms of tissue distribution, widely expressed, with highest levels in brain and lowest in liver and duodenum.

The protein resides in the endoplasmic reticulum membrane. Its subcellular location is the endoplasmic reticulum-Golgi intermediate compartment membrane. The protein localises to the cytoplasmic vesicle. It localises to the secretory vesicle. It is found in the synaptic vesicle membrane. The protein resides in the clathrin-coated vesicle membrane. Accessory subunit of the proton-transporting vacuolar (V)-ATPase protein pump, which is required for luminal acidification of secretory vesicles. Guides the V-type ATPase into specialized subcellular compartments, such as neuroendocrine regulated secretory vesicles or the ruffled border of the osteoclast, thereby regulating its activity. Involved in membrane trafficking and Ca(2+)-dependent membrane fusion. May play a role in the assembly of the V-type ATPase complex. In aerobic conditions, involved in intracellular iron homeostasis, thus triggering the activity of Fe(2+) prolyl hydroxylase (PHD) enzymes, and leading to HIF1A hydroxylation and subsequent proteasomal degradation. In islets of Langerhans cells, may regulate the acidification of dense-core secretory granules. In Homo sapiens (Human), this protein is V-type proton ATPase subunit S1 (ATP6AP1).